Reading from the N-terminus, the 262-residue chain is Acyl-[acyl-carrier-protein]--UDP-N-acetylglucosamine O-acyltransferase (262 aa).

The protein belongs to the transferase hexapeptide repeat family. LpxA subfamily. As to quaternary structure, homotrimer.

It localises to the cytoplasm. It carries out the reaction a (3R)-hydroxyacyl-[ACP] + UDP-N-acetyl-alpha-D-glucosamine = a UDP-3-O-[(3R)-3-hydroxyacyl]-N-acetyl-alpha-D-glucosamine + holo-[ACP]. Its pathway is glycolipid biosynthesis; lipid IV(A) biosynthesis; lipid IV(A) from (3R)-3-hydroxytetradecanoyl-[acyl-carrier-protein] and UDP-N-acetyl-alpha-D-glucosamine: step 1/6. In terms of biological role, involved in the biosynthesis of lipid A, a phosphorylated glycolipid that anchors the lipopolysaccharide to the outer membrane of the cell. The polypeptide is Acyl-[acyl-carrier-protein]--UDP-N-acetylglucosamine O-acyltransferase (Klebsiella pneumoniae (strain 342)).